Consider the following 21-residue polypeptide: Cupiennin-6e (21 aa).

S21 is modified (serine amide).

Expressed by the venom gland.

The protein resides in the secreted. In Cupiennius salei (American wandering spider), this protein is Cupiennin-6e.